The primary structure comprises 416 residues: Phosphoribosylamine--glycine ligase (416 aa).

In terms of domain architecture, ATP-grasp spans 107-303 (KDVMACAGVP…LAGLLMAAAT (197 aa)). 133–184 (LAAFGAPYVVKDDGLAAGKGVVVTDDVEAARAHANACDRVVVEEFLDGPEVS) serves as a coordination point for ATP. Mg(2+)-binding residues include Glu273 and Asn275.

This sequence belongs to the GARS family. The cofactor is Mg(2+). Mn(2+) serves as cofactor.

The catalysed reaction is 5-phospho-beta-D-ribosylamine + glycine + ATP = N(1)-(5-phospho-beta-D-ribosyl)glycinamide + ADP + phosphate + H(+). The protein operates within purine metabolism; IMP biosynthesis via de novo pathway; N(1)-(5-phospho-D-ribosyl)glycinamide from 5-phospho-alpha-D-ribose 1-diphosphate: step 2/2. This Streptomyces coelicolor (strain ATCC BAA-471 / A3(2) / M145) protein is Phosphoribosylamine--glycine ligase.